The primary structure comprises 577 residues: Solute carrier family 22 member 16 (577 aa).

The chain crosses the membrane as a helical span at residues 23-43 (LYFICAFQNISCGIHYLASVF). Residues N57, N65, N68, and N108 are each glycosylated (N-linked (GlcNAc...) asparagine). Transmembrane regions (helical) follow at residues 152–172 (WLAM…SVTF), 183–203 (VVLW…AFAV), 214–234 (FLAM…MEFI), 244–264 (VHLH…GYLV), and 268–288 (WLYQ…CWVL). 2 N-linked (GlcNAc...) asparagine glycosylation sites follow: N345 and N352. 6 helical membrane-spanning segments follow: residues 359-379 (TLTV…FSLN), 389-409 (LNLF…CIAM), 416-436 (TVLA…MVIP), 441-461 (ILGV…FGLI), 476-496 (LAVG…PFSV), and 501-521 (IWIF…GVLT). A disordered region spans residues 543–577 (ESENESKSSKLLLTTNNSGLEKTEAITPRDSGLGE). 2 N-linked (GlcNAc...) asparagine glycosylation sites follow: N546 and N558. Over residues 551 to 560 (SKLLLTTNNS) the composition is skewed to low complexity.

This sequence belongs to the major facilitator (TC 2.A.1) superfamily. Organic cation transporter (TC 2.A.1.19) family. As to expression, expressed in testis and epididymis (at protein level). Expressed in endometrium (at protein level); highly expressed during the normal secretory phase, but expression is significantly reduced in the proliferative phase. Expressed at lower levels in adult tissues including bone marrow (at protein level). Expressed in hematopoietic cells, including CD34(+) leukocytes. Expressed in fetal liver (at protein level), brain, lung, kidney, heart, skeletal muscle, spleen and thymus. Expressed in leukemia cells. Abundantly expressed in ovarian cancer clear-cell adenocarcinoma.

The protein localises to the cell membrane. The catalysed reaction is (R)-carnitine(in) = (R)-carnitine(out). It catalyses the reaction spermidine(in) = spermidine(out). Functionally, facilitative organic cation transporter that mediates the transport of carnitine as well as the polyamine spermidine. Mediates the partially Na(+)-dependent bidirectional transport of carnitine. May mediate L-carnitine secretion from testis epididymal epithelium into the lumen which is involved in the maturation of spermatozoa. The polypeptide is Solute carrier family 22 member 16 (Homo sapiens (Human)).